The chain runs to 554 residues: Glutamine--tRNA ligase (554 aa).

Residues 34 to 44 carry the 'HIGH' region motif; sequence PEPNGYLHIGH. Residues 35–37 and 41–47 contribute to the ATP site; these read EPN and HIGHAKS. L-glutamine contacts are provided by Asp67 and Tyr212. Residues Thr231, 261-262, and 269-271 contribute to the ATP site; these read RL and MSK. Residues 268-272 carry the 'KMSKS' region motif; the sequence is IMSKR.

Belongs to the class-I aminoacyl-tRNA synthetase family. Monomer.

The protein localises to the cytoplasm. The enzyme catalyses tRNA(Gln) + L-glutamine + ATP = L-glutaminyl-tRNA(Gln) + AMP + diphosphate. This Serratia proteamaculans (strain 568) protein is Glutamine--tRNA ligase.